A 194-amino-acid chain; its full sequence is Holliday junction branch migration complex subunit RuvA (194 aa).

Residues 1–64 (MIGRLRGILA…EDSVSLYGFL (64 aa)) form a domain I region. The tract at residues 65-140 (REGERRLFRD…RAADFSSGAP (76 aa)) is domain II. The tract at residues 140-144 (PITGQ) is flexible linker. The segment at 145–194 (LGPDAISEATVALQQLGYKPAEAARMARDAGAEGGEVATVIRKALQAALR) is domain III.

It belongs to the RuvA family. In terms of assembly, homotetramer. Forms an RuvA(8)-RuvB(12)-Holliday junction (HJ) complex. HJ DNA is sandwiched between 2 RuvA tetramers; dsDNA enters through RuvA and exits via RuvB. An RuvB hexamer assembles on each DNA strand where it exits the tetramer. Each RuvB hexamer is contacted by two RuvA subunits (via domain III) on 2 adjacent RuvB subunits; this complex drives branch migration. In the full resolvosome a probable DNA-RuvA(4)-RuvB(12)-RuvC(2) complex forms which resolves the HJ.

It is found in the cytoplasm. Its function is as follows. The RuvA-RuvB-RuvC complex processes Holliday junction (HJ) DNA during genetic recombination and DNA repair, while the RuvA-RuvB complex plays an important role in the rescue of blocked DNA replication forks via replication fork reversal (RFR). RuvA specifically binds to HJ cruciform DNA, conferring on it an open structure. The RuvB hexamer acts as an ATP-dependent pump, pulling dsDNA into and through the RuvAB complex. HJ branch migration allows RuvC to scan DNA until it finds its consensus sequence, where it cleaves and resolves the cruciform DNA. This Xanthomonas oryzae pv. oryzae (strain MAFF 311018) protein is Holliday junction branch migration complex subunit RuvA.